A 171-amino-acid polypeptide reads, in one-letter code: Inosine/xanthosine triphosphatase (171 aa).

8–13 lines the substrate pocket; it reads TTNPAK. 2 residues coordinate Mg(2+): Asp38 and Gln68.

It belongs to the YjjX NTPase family. Homodimer. Requires Mg(2+) as cofactor. Mn(2+) serves as cofactor.

It carries out the reaction XTP + H2O = XDP + phosphate + H(+). The enzyme catalyses ITP + H2O = IDP + phosphate + H(+). Phosphatase that hydrolyzes non-canonical purine nucleotides such as XTP and ITP to their respective diphosphate derivatives. Probably excludes non-canonical purines from DNA/RNA precursor pool, thus preventing their incorporation into DNA/RNA and avoiding chromosomal lesions. This is Inosine/xanthosine triphosphatase from Cronobacter sakazakii (strain ATCC BAA-894) (Enterobacter sakazakii).